The primary structure comprises 647 residues: Acetyl-coenzyme A synthetase (647 aa).

CoA-binding positions include 190-193 and threonine 310; that span reads RGGR. Residues 386–388, 410–415, aspartate 499, and arginine 514 contribute to the ATP site; these read GEP and DTWWQT. Residue serine 522 participates in CoA binding. ATP is bound at residue arginine 525. Valine 536, histidine 538, and valine 541 together coordinate Mg(2+). Arginine 583 contacts CoA. Lysine 608 is subject to N6-acetyllysine.

This sequence belongs to the ATP-dependent AMP-binding enzyme family. Mg(2+) serves as cofactor. Acetylated. Deacetylation by the SIR2-homolog deacetylase activates the enzyme.

The catalysed reaction is acetate + ATP + CoA = acetyl-CoA + AMP + diphosphate. Catalyzes the conversion of acetate into acetyl-CoA (AcCoA), an essential intermediate at the junction of anabolic and catabolic pathways. AcsA undergoes a two-step reaction. In the first half reaction, AcsA combines acetate with ATP to form acetyl-adenylate (AcAMP) intermediate. In the second half reaction, it can then transfer the acetyl group from AcAMP to the sulfhydryl group of CoA, forming the product AcCoA. In Xylella fastidiosa (strain 9a5c), this protein is Acetyl-coenzyme A synthetase.